Reading from the N-terminus, the 286-residue chain is Centromere protein P (286 aa).

Residues 1-73 (MDSETRELRA…RSEHSFLSKL (73 aa)) adopt a coiled-coil conformation. Position 38 is a phosphoserine (Ser38).

The protein belongs to the CENP-P/CTF19 family. Component of the CENPA-CAD complex, composed of CENPI, CENPK, CENPL, CENPO, CENPP, CENPQ, CENPR and CENPS. The CENPA-CAD complex interacts with the CENPA-NAC complex, at least composed of CENPA, CENPC, CENPH, CENPM, CENPN, CENPT and CENPU.

The protein resides in the nucleus. Its subcellular location is the chromosome. It localises to the centromere. In terms of biological role, component of the CENPA-CAD (nucleosome distal) complex, a complex recruited to centromeres which is involved in assembly of kinetochore proteins, mitotic progression and chromosome segregation. May be involved in incorporation of newly synthesized CENPA into centromeres via its interaction with the CENPA-NAC complex. In Mus musculus (Mouse), this protein is Centromere protein P (Cenpp).